The primary structure comprises 335 residues: Phosphatidate cytidylyltransferase, mitochondrial (335 aa).

This sequence belongs to the TAM41 family. It depends on Mg(2+) as a cofactor.

It is found in the mitochondrion inner membrane. The enzyme catalyses a 1,2-diacyl-sn-glycero-3-phosphate + CTP + H(+) = a CDP-1,2-diacyl-sn-glycerol + diphosphate. It functions in the pathway phospholipid metabolism; CDP-diacylglycerol biosynthesis; CDP-diacylglycerol from sn-glycerol 3-phosphate: step 3/3. In terms of biological role, catalyzes the conversion of phosphatidic acid (PA) to CDP-diacylglycerol (CDP-DAG), an essential intermediate in the synthesis of phosphatidylglycerol, cardiolipin and phosphatidylinositol. The polypeptide is Phosphatidate cytidylyltransferase, mitochondrial (TAMM41) (Bos taurus (Bovine)).